A 212-amino-acid polypeptide reads, in one-letter code: MILFRRHRTFLLAFTLLCTLLGLGCPLTCEVCKGSGHTCSGKMKTCEDGKDACVVLVSESSTKGRKSVNTFKACMKYKDCYSGFVSTTMTPSDYMVSNAHCCQSDGCNSGSVPPPLNNRTENGLMCPSCIAPFQETCPGTQAARCVGRETHCIYFAGNVQAGIIHTKFATRGCATESACHTKAGAEVPSAFYLYFLRRADCLPAPYPPGRGE.

The signal sequence occupies residues 1–24 (MILFRRHRTFLLAFTLLCTLLGLG). Residues 27-117 (LTCEVCKGSG…NSGSVPPPLN (91 aa)) form the UPAR/Ly6 domain. Cystine bridges form between C29/C53, C32/C39, C46/C74, C80/C101, C102/C107, C126/C152, and C145/C173.

The protein belongs to the CNF-like-inhibitor family.

The protein localises to the secreted. The sequence is that of phospholipase A2 inhibitor and Ly6/PLAUR domain-containing protein (Pinlyp) from Mus musculus (Mouse).